The sequence spans 185 residues: uncharacterized protein (185 aa).

Residues 160–185 (QYTGPAVPSVPTTNLNDIGDPTKTVQ) are disordered.

This is an uncharacterized protein from Saccharomyces cerevisiae (strain ATCC 204508 / S288c) (Baker's yeast).